The primary structure comprises 342 residues: Phosphate acyltransferase (342 aa).

This sequence belongs to the PlsX family. As to quaternary structure, homodimer. Probably interacts with PlsY.

It is found in the cytoplasm. The enzyme catalyses a fatty acyl-[ACP] + phosphate = an acyl phosphate + holo-[ACP]. It participates in lipid metabolism; phospholipid metabolism. In terms of biological role, catalyzes the reversible formation of acyl-phosphate (acyl-PO(4)) from acyl-[acyl-carrier-protein] (acyl-ACP). This enzyme utilizes acyl-ACP as fatty acyl donor, but not acyl-CoA. The chain is Phosphate acyltransferase from Leuconostoc mesenteroides subsp. mesenteroides (strain ATCC 8293 / DSM 20343 / BCRC 11652 / CCM 1803 / JCM 6124 / NCDO 523 / NBRC 100496 / NCIMB 8023 / NCTC 12954 / NRRL B-1118 / 37Y).